We begin with the raw amino-acid sequence, 341 residues long: D-aspartate oxidase (341 aa).

7 residues coordinate FAD: Asp36, Lys37, Thr43, Ser44, Met50, Gly307, and Ile311. The Microbody targeting signal signature appears at 339-341 (SKL).

This sequence belongs to the DAMOX/DASOX family. As to quaternary structure, homotetramer. Interacts with PEX5; the interaction is direct and required for localization of DDO to the peroxisome. It depends on FAD as a cofactor. Expressed in epithelial cells of the renal proximal tubules (not detected in the glomeruli or renal distal tubules), liver, right atrium of heart, lung, chief cells of the gastric mucosa, choroid plexus, pia mater, brain stem, midbrain, pons, medulla oblongata, hypothalamus, hippocampus, cerebral cortex, cerebellum, ependyma, olfactory bulb and the pituitary, pineal, thyroid and adrenal glands (at protein level).

Its subcellular location is the peroxisome matrix. It localises to the cytoplasm. The protein resides in the cytosol. The enzyme catalyses D-aspartate + O2 + H2O = oxaloacetate + H2O2 + NH4(+). The catalysed reaction is D-glutamate + O2 + H2O = H2O2 + 2-oxoglutarate + NH4(+). Selectively catalyzes the oxidative deamination of acidic amino acids. Suppresses the level of D-aspartate in the brain, an amino acid that can act as an agonist for glutamate receptors. Protects the organism from the toxicity of D-amino acids. May also function in the intestine. The chain is D-aspartate oxidase (DDO) from Sus scrofa (Pig).